The sequence spans 105 residues: Insulin (105 aa).

The N-terminal stretch at 1-24 (MALWTRLRPLLALLALWPPPPARA) is a signal peptide. Disulfide bonds link cysteine 31-cysteine 91, cysteine 43-cysteine 104, and cysteine 90-cysteine 95. A propeptide spans 57–82 (EVEGPQVGALELAGGPGAGGLEGPPQ) (c peptide).

Belongs to the insulin family. Heterodimer of a B chain and an A chain linked by two disulfide bonds.

Its subcellular location is the secreted. Its function is as follows. Insulin decreases blood glucose concentration. It increases cell permeability to monosaccharides, amino acids and fatty acids. It accelerates glycolysis, the pentose phosphate cycle, and glycogen synthesis in liver. This is Insulin (INS) from Bos taurus (Bovine).